A 255-amino-acid polypeptide reads, in one-letter code: MLLGVITLFPDMFQSIVRYGIVGRAIRRGILSIKLWNPRLFTYDRHHSVDARPYGGGPGMLMMIEPLRNAINQAKDELGNNIKVIYLSPQGRKLKQKYVYKLAYDHQKLILVCGRYQGIDERLIQTEIDEEWSIGDYILSGGELAAMVLIDTISRVLPGVLGNQDSKESDSFSKERLDCPHYTRPETFDGMKVPSVLLSGNHDEIHRWKQKQALGRTWIKRPDLLNYIQLTNEEKNLLSEFKNEYLLSLNKKTRK.

S-adenosyl-L-methionine is bound by residues G114 and 134-139; that span reads IGDYIL.

The protein belongs to the RNA methyltransferase TrmD family. Homodimer.

The protein localises to the cytoplasm. The catalysed reaction is guanosine(37) in tRNA + S-adenosyl-L-methionine = N(1)-methylguanosine(37) in tRNA + S-adenosyl-L-homocysteine + H(+). Its function is as follows. Specifically methylates guanosine-37 in various tRNAs. This Blochmanniella pennsylvanica (strain BPEN) protein is tRNA (guanine-N(1)-)-methyltransferase.